The sequence spans 314 residues: Acetylglutamate kinase (314 aa).

Residues 76 to 77, Arg-98, and Asn-199 contribute to the substrate site; that span reads GG.

The protein belongs to the acetylglutamate kinase family. ArgB subfamily.

The protein resides in the cytoplasm. It carries out the reaction N-acetyl-L-glutamate + ATP = N-acetyl-L-glutamyl 5-phosphate + ADP. It participates in amino-acid biosynthesis; L-arginine biosynthesis; N(2)-acetyl-L-ornithine from L-glutamate: step 2/4. In terms of biological role, catalyzes the ATP-dependent phosphorylation of N-acetyl-L-glutamate. This chain is Acetylglutamate kinase, found in Bifidobacterium longum (strain DJO10A).